Here is a 349-residue protein sequence, read N- to C-terminus: Fe(3+) ions import ATP-binding protein FbpC (349 aa).

The region spanning 4–236 (LELHHIGKSY…PVDEPTATFL (233 aa)) is the ABC transporter domain. Position 36-43 (36-43 (GPSGSGKT)) interacts with ATP.

Belongs to the ABC transporter superfamily. Fe(3+) ion importer (TC 3.A.1.10) family. As to quaternary structure, the complex is composed of two ATP-binding proteins (FbpC), two transmembrane proteins (FbpB) and a solute-binding protein (FbpA).

It is found in the cell inner membrane. The catalysed reaction is Fe(3+)(out) + ATP + H2O = Fe(3+)(in) + ADP + phosphate + H(+). In terms of biological role, part of the ABC transporter complex FbpABC involved in Fe(3+) ions import. Responsible for energy coupling to the transport system. This Yersinia pestis bv. Antiqua (strain Antiqua) protein is Fe(3+) ions import ATP-binding protein FbpC.